The primary structure comprises 251 residues: NADH-quinone oxidoreductase subunit C (251 aa).

A disordered region spans residues 1 to 34 (MSDANNTAGDANEVNPEKDLSAENLPGQRGQGGE).

This sequence belongs to the complex I 30 kDa subunit family. As to quaternary structure, NDH-1 is composed of 14 different subunits. Subunits NuoB, C, D, E, F, and G constitute the peripheral sector of the complex.

The protein resides in the cell membrane. It catalyses the reaction a quinone + NADH + 5 H(+)(in) = a quinol + NAD(+) + 4 H(+)(out). NDH-1 shuttles electrons from NADH, via FMN and iron-sulfur (Fe-S) centers, to quinones in the respiratory chain. The immediate electron acceptor for the enzyme in this species is believed to be a menaquinone. Couples the redox reaction to proton translocation (for every two electrons transferred, four hydrogen ions are translocated across the cytoplasmic membrane), and thus conserves the redox energy in a proton gradient. This chain is NADH-quinone oxidoreductase subunit C, found in Streptomyces coelicolor (strain ATCC BAA-471 / A3(2) / M145).